Reading from the N-terminus, the 968-residue chain is RNA polymerase-associated protein RapA (968 aa).

The Helicase ATP-binding domain maps to glutamate 163 to aspartate 332. ATP is bound at residue aspartate 176–threonine 183. Residues aspartate 278–histidine 281 carry the DEAH box motif. Positions arginine 491–asparagine 645 constitute a Helicase C-terminal domain.

This sequence belongs to the SNF2/RAD54 helicase family. RapA subfamily. In terms of assembly, interacts with the RNAP. Has a higher affinity for the core RNAP than for the holoenzyme. Its ATPase activity is stimulated by binding to RNAP.

Transcription regulator that activates transcription by stimulating RNA polymerase (RNAP) recycling in case of stress conditions such as supercoiled DNA or high salt concentrations. Probably acts by releasing the RNAP, when it is trapped or immobilized on tightly supercoiled DNA. Does not activate transcription on linear DNA. Probably not involved in DNA repair. The chain is RNA polymerase-associated protein RapA from Shewanella woodyi (strain ATCC 51908 / MS32).